Consider the following 983-residue polypeptide: Inner tegument protein (983 aa).

The segment at leucine 474–proline 983 is interaction with large tegument protein. Residues proline 902–glutamate 932 form a disordered region. Basic and acidic residues predominate over residues methionine 914–serine 923.

It belongs to the herpesviridae inner tegument protein family. In terms of assembly, interacts (via C-terminus) with the large tegument protein/LTP (via N-terminus).

Its subcellular location is the virion tegument. It localises to the host cytoplasm. The protein resides in the host nucleus. It is found in the host Golgi apparatus. The protein localises to the host trans-Golgi network. Plays an essential role in cytoplasmic secondary envelopment during viral egress. Interacts with the capsid via the large tegument protein/LTP and participates in its transport to the host trans-Golgi network (TGN) where secondary envelopment occurs. Modulates tegumentation and capsid accumulation at the viral assembly complex. The polypeptide is Inner tegument protein (UL47) (Homo sapiens (Human)).